The primary structure comprises 766 residues: MRIPLFILTFLFTFFSLATTPVSADSGVLYTDAVTYCAEAKAVIVDEFDITYHRSNGSVTFSFSLASVEPNLNTSVNLYINAYGIQIINQTLELCDLLQGVICPLPQVNFTGYGTYPIPAEYLSKIPSIAYTVPNIEAYARVQLIRVENNEVAACLQATLANGKTAHQKGVIWASAIFTLVAFLVAIWHTASGTSTSPIQYRWFDILFIFQVAAASGLLHLNYPLVYTNFVQNFHWALGLFYSSSMQSSISKMREKTGGSMDSTAYSEVQYINRKLSPYNVYMDDNGILSSPESLAAFFKESALSKRSLEHFAKRATIPSVLAQNMTTDINTGLPVYTNTLRIPEANAYDTIWFVFLALIGIFIAFHVLLFGMVLLFDRMGRNRSHLGWAARLRRMWWPFCVGNSLRLCLIGFFPIWIFAFWQFHIGDSGLSIFWAVFGILLTLVPLATAFLLSLLRARRISSTSPEINSLYTSFRYFHSIGVLYRQYRQKFHYFWFTPFVLAMIARAGFIAFGPASAWAQVIGNLVVEFIVLVALLACRPHKDKKGDWLGAFLSICRLIAIGLLIAFIPDMNVKPIPRAVIAFVIIVFYGVPVVFLFVGFLWNIGYGYLWCKHSTRVEDGLEVERFSPTSSNSSVPPPMMKNVDAATFVSSDGAAASRGSLSMGGAGASGAGLAGGAAAAGTGLGRRSSLIEPVGDNVYEASASSADGALSPPPVTAYNPYGKEEIGYPYDPQDSRLAYEQAAMGRGGVNGPGSPTDEKQWSRRY.

The N-terminal stretch at 1-24 (MRIPLFILTFLFTFFSLATTPVSA) is a signal peptide. At 25–170 (DSGVLYTDAV…ANGKTAHQKG (146 aa)) the chain is on the lumenal side. Residues Asn56, Asn73, Asn89, and Asn109 are each glycosylated (N-linked (GlcNAc...) asparagine). The helical transmembrane segment at 171–191 (VIWASAIFTLVAFLVAIWHTA) threads the bilayer. Residues 192-205 (SGTSTSPIQYRWFD) lie on the Cytoplasmic side of the membrane. Residues 206–226 (ILFIFQVAAASGLLHLNYPLV) form a helical membrane-spanning segment. Over 227–351 (YTNFVQNFHW…RIPEANAYDT (125 aa)) the chain is Lumenal. Asn325 is a glycosylation site (N-linked (GlcNAc...) asparagine). Residues 352–372 (IWFVFLALIGIFIAFHVLLFG) traverse the membrane as a helical segment. The Cytoplasmic segment spans residues 373-407 (MVLLFDRMGRNRSHLGWAARLRRMWWPFCVGNSLR). The helical transmembrane segment at 408-428 (LCLIGFFPIWIFAFWQFHIGD) threads the bilayer. Residues 429–432 (SGLS) are Lumenal-facing. The helical transmembrane segment at 433-453 (IFWAVFGILLTLVPLATAFLL) threads the bilayer. Over 454-493 (SLLRARRISSTSPEINSLYTSFRYFHSIGVLYRQYRQKFH) the chain is Cytoplasmic. A helical membrane pass occupies residues 494 to 514 (YFWFTPFVLAMIARAGFIAFG). The Lumenal portion of the chain corresponds to 515 to 517 (PAS). The chain crosses the membrane as a helical span at residues 518-538 (AWAQVIGNLVVEFIVLVALLA). At 539–548 (CRPHKDKKGD) the chain is on the cytoplasmic side. Residues 549–569 (WLGAFLSICRLIAIGLLIAFI) traverse the membrane as a helical segment. The Lumenal portion of the chain corresponds to 570 to 580 (PDMNVKPIPRA). Residues 581 to 601 (VIAFVIIVFYGVPVVFLFVGF) traverse the membrane as a helical segment. Residues 602–766 (LWNIGYGYLW…TDEKQWSRRY (165 aa)) lie on the Cytoplasmic side of the membrane. The tract at residues 704 to 766 (ASSADGALSP…TDEKQWSRRY (63 aa)) is disordered. Residues 757–766 (TDEKQWSRRY) are compositionally biased toward basic and acidic residues.

It belongs to the transient receptor potential (TRP) ion channel family.

It localises to the endoplasmic reticulum membrane. Functionally, endoplasmic reticulum membrane flavin carrier protein that plays a crucial role in Ca(2+) signaling/homeostasis via the modulation of the calcineurin-Crz1 stress response pathway which is important for both stress responses and virulence. The sequence is that of TRP-like ion channel protein flc1 from Cryptococcus neoformans var. grubii serotype A (strain H99 / ATCC 208821 / CBS 10515 / FGSC 9487) (Filobasidiella neoformans var. grubii).